The sequence spans 509 residues: MTQQNAQSTSEPTISENDLIAQRHAKLKQIQDVAKETGKSPWPNTFKREHYAADLQEQFKDQSKEQIESAEHVYVKVAGRVMLNRGSFMVIQDMTGRIQLYVDRKGLPKDTLETIKGLDLGDIIAAEGYIGRSGKGDLYVHLEGFELLTKSLRPLPDKFHGLNDTEVKYRKRYLDLIVNEETRKTFEIRAKVVAGIRAFLTNERFMEVETPMMHVIPGGASARPFETHHNALDMPLFLRIAPELYLKRLVVGGFERVFEINRNFRNEGVSTRHNPEFTMIEFYQAYADYKDLMALTENMLEKLALDILGTTDVPYQGEVFSFKGPFKKISMFDAILENNPQFTPENVGDREFLAKFVREELKEEVKPGFGLGKLQTIVFEETVETKLRQPTFITEYPAETSPLARRNDDNPHITDRFEFFIGGRELANGFSELNDPIDQAERFQAQVAEKDAGDDEAMHYDAEFVEALEYGLPPTAGEGIGIDRLVMLFADAPSIRDVILFPHMRRKEG.

Residues glutamate 418 and glutamate 425 each coordinate Mg(2+).

Belongs to the class-II aminoacyl-tRNA synthetase family. As to quaternary structure, homodimer. Mg(2+) is required as a cofactor.

It is found in the cytoplasm. The catalysed reaction is tRNA(Lys) + L-lysine + ATP = L-lysyl-tRNA(Lys) + AMP + diphosphate. In Acinetobacter baumannii (strain AB307-0294), this protein is Lysine--tRNA ligase.